The sequence spans 85 residues: Putative membrane protein insertion efficiency factor (85 aa).

Belongs to the UPF0161 family.

The protein resides in the cell inner membrane. Could be involved in insertion of integral membrane proteins into the membrane. This chain is Putative membrane protein insertion efficiency factor, found in Escherichia fergusonii (strain ATCC 35469 / DSM 13698 / CCUG 18766 / IAM 14443 / JCM 21226 / LMG 7866 / NBRC 102419 / NCTC 12128 / CDC 0568-73).